A 637-amino-acid chain; its full sequence is 1-deoxy-D-xylulose-5-phosphate synthase (637 aa).

Residues His76 and 117–119 (AHS) contribute to the thiamine diphosphate site. Position 148 (Asp148) interacts with Mg(2+). Residues 149–150 (GA), Asn177, Tyr287, and Glu369 each bind thiamine diphosphate. Asn177 provides a ligand contact to Mg(2+).

Belongs to the transketolase family. DXPS subfamily. As to quaternary structure, homodimer. It depends on Mg(2+) as a cofactor. The cofactor is thiamine diphosphate.

The catalysed reaction is D-glyceraldehyde 3-phosphate + pyruvate + H(+) = 1-deoxy-D-xylulose 5-phosphate + CO2. The protein operates within metabolic intermediate biosynthesis; 1-deoxy-D-xylulose 5-phosphate biosynthesis; 1-deoxy-D-xylulose 5-phosphate from D-glyceraldehyde 3-phosphate and pyruvate: step 1/1. Functionally, catalyzes the acyloin condensation reaction between C atoms 2 and 3 of pyruvate and glyceraldehyde 3-phosphate to yield 1-deoxy-D-xylulose-5-phosphate (DXP). This is 1-deoxy-D-xylulose-5-phosphate synthase from Pelagibacter ubique (strain HTCC1062).